The sequence spans 396 residues: NADH-quinone oxidoreductase subunit D (396 aa).

It belongs to the complex I 49 kDa subunit family. As to quaternary structure, NDH-1 is composed of 14 different subunits. Subunits NuoB, C, D, E, F, and G constitute the peripheral sector of the complex.

The protein resides in the cell inner membrane. It carries out the reaction a quinone + NADH + 5 H(+)(in) = a quinol + NAD(+) + 4 H(+)(out). Functionally, NDH-1 shuttles electrons from NADH, via FMN and iron-sulfur (Fe-S) centers, to quinones in the respiratory chain. The immediate electron acceptor for the enzyme in this species is believed to be ubiquinone. Couples the redox reaction to proton translocation (for every two electrons transferred, four hydrogen ions are translocated across the cytoplasmic membrane), and thus conserves the redox energy in a proton gradient. The polypeptide is NADH-quinone oxidoreductase subunit D (Orientia tsutsugamushi (strain Ikeda) (Rickettsia tsutsugamushi)).